Here is a 175-residue protein sequence, read N- to C-terminus: Transcription factor E (175 aa).

An HTH TFE/IIEalpha-type domain is found at 4–88; it reads AEDLFINLAK…YWKPNIDQIN (85 aa).

Belongs to the TFE family. Monomer. Interaction with RNA polymerase subunits RpoF and RpoE is necessary for Tfe stimulatory transcription activity. Able to interact with Tbp and RNA polymerase in the absence of DNA promoter. Interacts both with the preinitiation and elongation complexes.

Its function is as follows. Transcription factor that plays a role in the activation of archaeal genes transcribed by RNA polymerase. Facilitates transcription initiation by enhancing TATA-box recognition by TATA-box-binding protein (Tbp), and transcription factor B (Tfb) and RNA polymerase recruitment. Not absolutely required for transcription in vitro, but particularly important in cases where Tbp or Tfb function is not optimal. It dynamically alters the nucleic acid-binding properties of RNA polymerases by stabilizing the initiation complex and destabilizing elongation complexes. Seems to translocate with the RNA polymerase following initiation and acts by binding to the non template strand of the transcription bubble in elongation complexes. The chain is Transcription factor E from Saccharolobus islandicus (strain Y.N.15.51 / Yellowstone #2) (Sulfolobus islandicus).